Consider the following 159-residue polypeptide: Ribosomal RNA large subunit methyltransferase H (159 aa).

S-adenosyl-L-methionine contacts are provided by residues leucine 76, glycine 108, and 127–132 (FGRLTL).

The protein belongs to the RNA methyltransferase RlmH family. As to quaternary structure, homodimer.

It localises to the cytoplasm. It catalyses the reaction pseudouridine(1915) in 23S rRNA + S-adenosyl-L-methionine = N(3)-methylpseudouridine(1915) in 23S rRNA + S-adenosyl-L-homocysteine + H(+). Its function is as follows. Specifically methylates the pseudouridine at position 1915 (m3Psi1915) in 23S rRNA. The polypeptide is Ribosomal RNA large subunit methyltransferase H (Streptococcus uberis (strain ATCC BAA-854 / 0140J)).